The chain runs to 227 residues: Ribosomal RNA large subunit methyltransferase E (227 aa).

S-adenosyl-L-methionine is bound by residues Gly78, Trp80, Asp103, Asp119, and Asp143. The Proton acceptor role is filled by Lys183.

Belongs to the class I-like SAM-binding methyltransferase superfamily. RNA methyltransferase RlmE family.

The protein localises to the cytoplasm. The catalysed reaction is uridine(2552) in 23S rRNA + S-adenosyl-L-methionine = 2'-O-methyluridine(2552) in 23S rRNA + S-adenosyl-L-homocysteine + H(+). Functionally, specifically methylates the uridine in position 2552 of 23S rRNA at the 2'-O position of the ribose in the fully assembled 50S ribosomal subunit. This Rickettsia conorii (strain ATCC VR-613 / Malish 7) protein is Ribosomal RNA large subunit methyltransferase E.